The following is a 251-amino-acid chain: Phosphate import ATP-binding protein PstB 2 (251 aa).

The ABC transporter domain maps to 5–246 (ITSKDVHLSY…PKKQITSDYL (242 aa)). 37-44 (GPSGCGKS) serves as a coordination point for ATP.

It belongs to the ABC transporter superfamily. Phosphate importer (TC 3.A.1.7) family. As to quaternary structure, the complex is composed of two ATP-binding proteins (PstB), two transmembrane proteins (PstC and PstA) and a solute-binding protein (PstS).

The protein resides in the cell membrane. It carries out the reaction phosphate(out) + ATP + H2O = ADP + 2 phosphate(in) + H(+). In terms of biological role, part of the ABC transporter complex PstSACB involved in phosphate import. Responsible for energy coupling to the transport system. The chain is Phosphate import ATP-binding protein PstB 2 from Lactobacillus johnsonii (strain CNCM I-12250 / La1 / NCC 533).